The chain runs to 136 residues: Putative pre-16S rRNA nuclease (136 aa).

The protein belongs to the YqgF nuclease family.

Its subcellular location is the cytoplasm. Its function is as follows. Could be a nuclease involved in processing of the 5'-end of pre-16S rRNA. This is Putative pre-16S rRNA nuclease from Francisella tularensis subsp. holarctica (strain FTNF002-00 / FTA).